The chain runs to 235 residues: Orotidine 5'-phosphate decarboxylase (235 aa).

Substrate-binding positions include Asp-12, Lys-34, 61–70 (DMKLLDIDNT), Thr-116, Arg-177, Gln-186, and Arg-207. Lys-63 (proton donor) is an active-site residue.

This sequence belongs to the OMP decarboxylase family. Type 1 subfamily. As to quaternary structure, homodimer.

It carries out the reaction orotidine 5'-phosphate + H(+) = UMP + CO2. It functions in the pathway pyrimidine metabolism; UMP biosynthesis via de novo pathway; UMP from orotate: step 2/2. Functionally, catalyzes the decarboxylation of orotidine 5'-monophosphate (OMP) to uridine 5'-monophosphate (UMP). In Rhizobium etli (strain CIAT 652), this protein is Orotidine 5'-phosphate decarboxylase.